The primary structure comprises 285 residues: Polyamine aminopropyltransferase (285 aa).

Residues 5–241 (DTWFTEHFQT…GWWSVTLSSK (237 aa)) enclose the PABS domain. S-methyl-5'-thioadenosine is bound at residue Gln35. Residues His66 and Asp90 each contribute to the spermidine site. Residues Asp110 and 141-142 (DG) contribute to the S-methyl-5'-thioadenosine site. The active-site Proton acceptor is Asp160. Residue 160 to 163 (DSTD) participates in spermidine binding. Pro167 serves as a coordination point for S-methyl-5'-thioadenosine.

It belongs to the spermidine/spermine synthase family. Homodimer or homotetramer.

The protein resides in the cytoplasm. It catalyses the reaction S-adenosyl 3-(methylsulfanyl)propylamine + putrescine = S-methyl-5'-thioadenosine + spermidine + H(+). It functions in the pathway amine and polyamine biosynthesis; spermidine biosynthesis; spermidine from putrescine: step 1/1. Functionally, catalyzes the irreversible transfer of a propylamine group from the amino donor S-adenosylmethioninamine (decarboxy-AdoMet) to putrescine (1,4-diaminobutane) to yield spermidine. The polypeptide is Polyamine aminopropyltransferase (Xylella fastidiosa (strain Temecula1 / ATCC 700964)).